The chain runs to 526 residues: Peptide chain release factor 3 (526 aa).

The tr-type G domain occupies 9–277 (NKRRTFAIIS…DFVEYAPGPQ (269 aa)). GTP contacts are provided by residues 18-25 (SHPDAGKT), 86-90 (DTPGH), and 140-143 (NKLD).

This sequence belongs to the TRAFAC class translation factor GTPase superfamily. Classic translation factor GTPase family. PrfC subfamily.

The protein resides in the cytoplasm. Increases the formation of ribosomal termination complexes and stimulates activities of RF-1 and RF-2. It binds guanine nucleotides and has strong preference for UGA stop codons. It may interact directly with the ribosome. The stimulation of RF-1 and RF-2 is significantly reduced by GTP and GDP, but not by GMP. This is Peptide chain release factor 3 from Legionella pneumophila (strain Lens).